A 264-amino-acid chain; its full sequence is tRNA (guanine-N(1)-)-methyltransferase (264 aa).

S-adenosyl-L-methionine-binding positions include glycine 120 and isoleucine 140–leucine 145.

The protein belongs to the RNA methyltransferase TrmD family. As to quaternary structure, homodimer.

The protein resides in the cytoplasm. The catalysed reaction is guanosine(37) in tRNA + S-adenosyl-L-methionine = N(1)-methylguanosine(37) in tRNA + S-adenosyl-L-homocysteine + H(+). Specifically methylates guanosine-37 in various tRNAs. The chain is tRNA (guanine-N(1)-)-methyltransferase from Halorhodospira halophila (strain DSM 244 / SL1) (Ectothiorhodospira halophila (strain DSM 244 / SL1)).